A 322-amino-acid chain; its full sequence is Transaldolase (322 aa).

Lysine 136 acts as the Schiff-base intermediate with substrate in catalysis.

Belongs to the transaldolase family. Type 1 subfamily. As to quaternary structure, homodimer.

It is found in the cytoplasm. It catalyses the reaction D-sedoheptulose 7-phosphate + D-glyceraldehyde 3-phosphate = D-erythrose 4-phosphate + beta-D-fructose 6-phosphate. The protein operates within carbohydrate degradation; pentose phosphate pathway; D-glyceraldehyde 3-phosphate and beta-D-fructose 6-phosphate from D-ribose 5-phosphate and D-xylulose 5-phosphate (non-oxidative stage): step 2/3. Its function is as follows. Transaldolase is important for the balance of metabolites in the pentose-phosphate pathway. The chain is Transaldolase from Xanthomonas oryzae pv. oryzae (strain KACC10331 / KXO85).